The primary structure comprises 145 residues: Deoxyuridine 5'-triphosphate nucleotidohydrolase (145 aa).

Substrate contacts are provided by residues 62-64 (RSG), Asn-75, 79-81 (TVD), and Lys-89.

This sequence belongs to the dUTPase family. The cofactor is Mg(2+).

It catalyses the reaction dUTP + H2O = dUMP + diphosphate + H(+). The protein operates within pyrimidine metabolism; dUMP biosynthesis; dUMP from dCTP (dUTP route): step 2/2. Its function is as follows. This enzyme is involved in nucleotide metabolism: it produces dUMP, the immediate precursor of thymidine nucleotides and it decreases the intracellular concentration of dUTP so that uracil cannot be incorporated into DNA. The protein is Deoxyuridine 5'-triphosphate nucleotidohydrolase of Helicobacter pylori (strain P12).